We begin with the raw amino-acid sequence, 444 residues long: Putative methylesterase 15, chloroplastic (444 aa).

Polar residues predominate over residues 1–27 (MGNSLRCISQEQDPNQKKPSSVVNGNS). Disordered stretches follow at residues 1–36 (MGNS…RRLS) and 48–91 (PSLS…DSLI). The transit peptide at 1 to 58 (MGNSLRCISQEQDPNQKKPSSVVNGNSSEKHVRRLSLIPSFRRRTLLPSLSCSGSSTS) directs the protein to the chloroplast. The segment covering 53 to 63 (SGSSTSSTSKK) has biased composition (low complexity). Residues 64-80 (GGIKTKKKIRERHHQEQ) show a composition bias toward basic residues. Residues 81 to 90 (HHHDHEKDSL) show a composition bias toward basic and acidic residues. In terms of domain architecture, AB hydrolase-1 spans 188–312 (FVLVHGGGFG…QPDSNYDLME (125 aa)). The active-site Acyl-ester intermediate is Asp-262. Residues Asp-390 and His-418 each act as charge relay system in the active site.

This sequence belongs to the AB hydrolase superfamily. Methylesterase family.

The protein resides in the plastid. It localises to the chloroplast. Putative methylesterase. The chain is Putative methylesterase 15, chloroplastic from Arabidopsis thaliana (Mouse-ear cress).